Consider the following 549-residue polypeptide: Undecaprenyl phosphate-alpha-4-amino-4-deoxy-L-arabinose arabinosyl transferase (549 aa).

12 helical membrane-spanning segments follow: residues 9-29, 80-100, 112-132, 136-156, 176-196, 204-224, 256-276, 288-308, 312-332, 346-366, 376-396, and 402-422; these read LLLI…GLWI, LFGV…LAYL, SLAC…SGYA, PQFT…LDAG, FLTK…PYML, LLGY…PWAL, PWWF…GLLP, QPPV…FSLS, LPTY…HALV, NGLL…YLQL, FELF…LAQW, and AWAA…AAMP.

This sequence belongs to the glycosyltransferase 83 family.

Its subcellular location is the cell inner membrane. It catalyses the reaction 4-amino-4-deoxy-alpha-L-arabinopyranosyl di-trans,octa-cis-undecaprenyl phosphate + lipid IVA = lipid IIA + di-trans,octa-cis-undecaprenyl phosphate.. It functions in the pathway lipopolysaccharide metabolism; 4-amino-4-deoxy-beta-L-arabinose-lipid A biosynthesis. Functionally, catalyzes the transfer of the L-Ara4N moiety of the glycolipid undecaprenyl phosphate-alpha-L-Ara4N to lipid A. The modified arabinose is attached to lipid A and is required for resistance to polymyxin and cationic antimicrobial peptides. This Pseudomonas paraeruginosa (strain DSM 24068 / PA7) (Pseudomonas aeruginosa (strain PA7)) protein is Undecaprenyl phosphate-alpha-4-amino-4-deoxy-L-arabinose arabinosyl transferase.